We begin with the raw amino-acid sequence, 158 residues long: MINGVYYNEISRDLDISSSTQCLRFLKETVIPSLANNGNNSTSIQYHGISKNDNIKKSVNKLDKQINMADRSLGLQQVVCIFSYGPHIQKMLSILEIFKKGYIKNNKKIYQWNKLTSFDIKREGRNELQEERLKVPILVTLVSDSEIIDLNLHSFTKQ.

Positions 51 to 71 form a coiled coil; that stretch reads KNDNIKKSVNKLDKQINMADR.

Component of nuclear RNase P and RNase MRP complexes. RNase P consists of an RNA moiety and at least 9 protein subunits including POP1, POP3, POP4, POP5, POP6, POP7, POP8, RPP1 and RPR2. RNase MRP complex consists of an RNA moiety and at least 10 protein subunits including POP1, POP3, POP4, POP5, POP6, POP7, POP8, RMP1, RPP1 and SNM1, many of which are shared with the RNase P complex.

It is found in the nucleus. It catalyses the reaction Endonucleolytic cleavage of RNA, removing 5'-extranucleotides from tRNA precursor.. In terms of biological role, component of ribonuclease P, a protein complex that generates mature tRNA molecules by cleaving their 5'-ends. Also a component of RNase MRP, which cleaves pre-rRNA sequences. The protein is Ribonucleases P/MRP protein subunit POP6 (POP6) of Saccharomyces cerevisiae (strain ATCC 204508 / S288c) (Baker's yeast).